The chain runs to 266 residues: Undecaprenyl-diphosphatase (266 aa).

Transmembrane regions (helical) follow at residues L4–S24, G41–Y61, A79–V99, L108–I128, M143–V163, A184–W204, I220–V240, and F243–L263.

The protein belongs to the UppP family.

The protein resides in the cell inner membrane. It carries out the reaction di-trans,octa-cis-undecaprenyl diphosphate + H2O = di-trans,octa-cis-undecaprenyl phosphate + phosphate + H(+). Catalyzes the dephosphorylation of undecaprenyl diphosphate (UPP). Confers resistance to bacitracin. This Sphingopyxis alaskensis (strain DSM 13593 / LMG 18877 / RB2256) (Sphingomonas alaskensis) protein is Undecaprenyl-diphosphatase.